A 110-amino-acid polypeptide reads, in one-letter code: Nucleoid-associated protein Mkms_4993 (110 aa).

It belongs to the YbaB/EbfC family. As to quaternary structure, homodimer.

It localises to the cytoplasm. The protein localises to the nucleoid. Its function is as follows. Binds to DNA and alters its conformation. May be involved in regulation of gene expression, nucleoid organization and DNA protection. The polypeptide is Nucleoid-associated protein Mkms_4993 (Mycobacterium sp. (strain KMS)).